The following is a 213-amino-acid chain: Large ribosomal subunit protein uL1 (213 aa).

The protein belongs to the universal ribosomal protein uL1 family. In terms of assembly, part of the 50S ribosomal subunit.

Its function is as follows. Binds directly to 23S rRNA. Probably involved in E site tRNA release. In terms of biological role, protein L1 is also a translational repressor protein, it controls the translation of its operon by binding to its mRNA. This chain is Large ribosomal subunit protein uL1, found in Methanocorpusculum labreanum (strain ATCC 43576 / DSM 4855 / Z).